A 1044-amino-acid chain; its full sequence is Isoleucine--tRNA ligase (1044 aa).

A 'HIGH' region motif is present at residues 48 to 58 (PFATGLPHFGH). The 'KMSKS' region motif lies at 594-598 (KMSKS). Lys-597 lines the ATP pocket.

This sequence belongs to the class-I aminoacyl-tRNA synthetase family. IleS type 2 subfamily. Monomer. It depends on Zn(2+) as a cofactor.

The protein localises to the cytoplasm. The enzyme catalyses tRNA(Ile) + L-isoleucine + ATP = L-isoleucyl-tRNA(Ile) + AMP + diphosphate. Functionally, catalyzes the attachment of isoleucine to tRNA(Ile). As IleRS can inadvertently accommodate and process structurally similar amino acids such as valine, to avoid such errors it has two additional distinct tRNA(Ile)-dependent editing activities. One activity is designated as 'pretransfer' editing and involves the hydrolysis of activated Val-AMP. The other activity is designated 'posttransfer' editing and involves deacylation of mischarged Val-tRNA(Ile). In Borrelia turicatae (strain 91E135), this protein is Isoleucine--tRNA ligase.